A 186-amino-acid chain; its full sequence is Ran guanine nucleotide release factor (186 aa).

The interval 27 to 70 is interaction with RAN; it reads DLRPVPDNQEVFCHPVTDQSLIVELLELQAHVRGEAAARYHFED.

The protein belongs to the MOG1 family. As to quaternary structure, monomer. Interacts with RAN, both RAN-GTP and RAN-GDP. Competes with RCC1 for a common binding site on RAN and thereby inhibits RCC1-mediated nucleotide exchange. Forms a complex with RAN-GTP and RANBP1. Interacts with the cytoplasmic loop 2 of SCN5A. Isoform 1 and isoform 2 are ubiquitously expressed. Detected in heart and brain.

It is found in the nucleus. It localises to the cytoplasm. The protein localises to the perinuclear region. Its subcellular location is the cell membrane. In terms of biological role, may regulate the intracellular trafficking of RAN. Promotes guanine nucleotide release from RAN and inhibits binding of new GTP by preventing the binding of the RAN guanine nucleotide exchange factor RCC1. Regulates the levels of GTP-bound RAN in the nucleus, and thereby plays a role in the regulation of RAN-dependent mitotic spindle dynamics. Enhances the expression of SCN5A at the cell membrane in cardiomyocytes. This is Ran guanine nucleotide release factor (RANGRF) from Homo sapiens (Human).